Reading from the N-terminus, the 181-residue chain is uncharacterized protein (181 aa).

In terms of domain architecture, Macro spans 1-178 (MVVAYKLSNG…VFKKVFDNSL (178 aa)).

This is an uncharacterized protein from Sulfolobus acidocaldarius (strain ATCC 33909 / DSM 639 / JCM 8929 / NBRC 15157 / NCIMB 11770).